The sequence spans 210 residues: Large ribosomal subunit protein uL4 (210 aa).

It belongs to the universal ribosomal protein uL4 family. Part of the 50S ribosomal subunit.

One of the primary rRNA binding proteins, this protein initially binds near the 5'-end of the 23S rRNA. It is important during the early stages of 50S assembly. It makes multiple contacts with different domains of the 23S rRNA in the assembled 50S subunit and ribosome. Functionally, forms part of the polypeptide exit tunnel. The protein is Large ribosomal subunit protein uL4 (rplD) of Thermus thermophilus.